We begin with the raw amino-acid sequence, 359 residues long: Alanine racemase (359 aa).

Lys-34 functions as the Proton acceptor; specific for D-alanine in the catalytic mechanism. Lys-34 carries the N6-(pyridoxal phosphate)lysine modification. Arg-129 provides a ligand contact to substrate. The Proton acceptor; specific for L-alanine role is filled by Tyr-255. A substrate-binding site is contributed by Met-303.

Belongs to the alanine racemase family. It depends on pyridoxal 5'-phosphate as a cofactor.

The enzyme catalyses L-alanine = D-alanine. It functions in the pathway amino-acid biosynthesis; D-alanine biosynthesis; D-alanine from L-alanine: step 1/1. Its function is as follows. Catalyzes the interconversion of L-alanine and D-alanine. May also act on other amino acids. This is Alanine racemase (alr) from Shigella dysenteriae serotype 1 (strain Sd197).